A 643-amino-acid chain; its full sequence is Replication protein E1 (643 aa).

The Nuclear localization signal motif lies at 83 to 85 (KRK). 3 positions are modified to phosphoserine; by host: Ser89, Ser93, and Ser107. A Nuclear export signal motif is present at residues 106–115 (LSPRLGGLTL). Residues 155–184 (AVHGTMGNGGAVGSELGVQENEEGSTTSTP) are disordered. A DNA-binding region region spans residues 180-346 (TTSTPTTRVV…QTILEHCFAD (167 aa)). Residues 445 to 595 (IDFLAFMSAF…FPLDTNGNPV (151 aa)) enclose the SF3 helicase domain. Residue 471-478 (GPPNTGKS) participates in ATP binding. A Glycyl lysine isopeptide (Lys-Gly) (interchain with G-Cter in SUMO) cross-link involves residue Lys552.

Belongs to the papillomaviridae E1 protein family. As to quaternary structure, can form hexamers. Interacts with E2 protein; this interaction increases E1 DNA binding specificity. Interacts with host DNA polymerase subunit POLA2. Interacts with host single stranded DNA-binding protein RPA1. Interacts with host TOP1; this interaction stimulates the enzymatic activity of TOP1. In terms of processing, phosphorylated. Sumoylated.

It is found in the host nucleus. It carries out the reaction Couples ATP hydrolysis with the unwinding of duplex DNA by translocating in the 3'-5' direction.. It catalyses the reaction ATP + H2O = ADP + phosphate + H(+). ATP-dependent DNA 3'-5' helicase required for initiation of viral DNA replication. It forms a complex with the viral E2 protein. The E1-E2 complex binds to the replication origin which contains binding sites for both proteins. During the initial step, a dimer of E1 interacts with a dimer of protein E2 leading to a complex that binds the viral origin of replication with high specificity. Then, a second dimer of E1 displaces the E2 dimer in an ATP-dependent manner to form the E1 tetramer. Following this, two E1 monomers are added to each half of the site, which results in the formation of two E1 trimers on the viral ori. Subsequently, two hexamers will be created. The double hexamer acts as a bi-directional helicase machinery and unwinds the viral DNA and then recruits the host DNA polymerase to start replication. This is Replication protein E1 from Human papillomavirus 42.